Reading from the N-terminus, the 95-residue chain is MLFFSFFKTLVDQEVVVELKNDIEIKGTLQSVDQFLNLKLDNISCTDEKKYPHLGSVRNIFIRGSTVRYVYLNKNMVDTNLLQDATRREVMTERK.

Residues L2–M76 form the Sm domain.

Belongs to the snRNP Sm proteins family. Component of the heptameric LSM1-LSM7 complex that forms a seven-membered ring structure with a donut shape. The LSm subunits are arranged in the order LSM1, LSM2, LSM3, LSM6, LSM5, LSM7 and LSM4. Except for LSM1, where a C-terminal helix crosses the ring structure to form additional interactions with LSM3 and LSM6, each subunit interacts only with its two neighboring subunits. The LSM1-LSM7 complex interacts with PAT1; within the complex PAT1 has direct interactions with LSM2 and LSM3. The LSM1-LSM7 complex interacts with XRN1. Component of the heptameric LSM2-LSM8 complex that forms a seven-membered ring structure with a donut shape; an RNA strand can pass through the hole in the center of the ring structure. The LSm subunits are arranged in the order LSM8, LSM2, LSM3, LSM6, LSM5, LSM7 and LSM4. Interacts with U6 snRNA SNR6 and chaperone PRP24; to promote formation of the U4/U6-U5 tri-snRNP (small nuclear ribonucleoprotein) complex, the LSM2-LSM8 complex preferentially binds U6 snRNA that has been modified to contain a non-cyclic 3' phosphate. Component of the spliceosome U4/U6-U5 tri-snRNP complex composed of the U4, U6 and U5 snRNAs and at least PRP3, PRP4, PRP6, PRP8, PRP18, PRP31, PRP38, SNU13, SNU23, SNU66, SNU114, SPP381, SMB1, SMD1, SMD2, SMD3, SMX2, SMX3, LSM2, LSM3, LSM4, LSM5, LSM6, LSM7, LSM8, BRR2 and DIB1. May be found in a complex comprising LSM2-LSM7 without LSM1 or LSM8; the complex associates with pre-P RNA and snoRNA SNR5.

It localises to the nucleus. The protein localises to the nucleolus. Its subcellular location is the cytoplasm. Its function is as follows. Component of LSm protein complexes, which are involved in RNA processing and may function in a chaperone-like manner. Component of the cytoplasmic LSM1-LSM7 complex which is involved in mRNA degradation by activating the decapping step. Together with PAT1, the LSM1-LSM7 complex binds to osmotic stress-activated mRNAs to attenuate the osmotic stress response, probably by limiting ribosome access to the mRNA and consequently translation. Component of the nuclear LSM2-LSM8 complex, which is involved in spliceosome assembly. The LSM2-LSM8 complex plays a role in the biogenesis of the spliceosomal U4/U6-U5 tri-snRNP complex by accelerating PRP24-mediated annealing of U4/U6 di-snRNA. The LSM2-LSM8 complex binds U6 snRNA terminating with a non-cyclic 3' phosphate group. LSM2-LSM8 is probably also involved in degradation of nuclear pre-mRNA by targeting them for decapping. LSM2-LSM8 could be involved in processing of pre-tRNAs, pre-rRNAs and U3 snoRNA, although involvement may be indirect. In a complex that probably contains LSM2-LSM7, but not LSM1 or LSM8, associates with the precursor of the RNA component of RNase P (pre-P RNA) and may be involved in maturing pre-P RNA; the complex also associates with snoRNA SNR5. The protein is LSM complex subunit LSM2 (LSM2) of Saccharomyces cerevisiae (strain ATCC 204508 / S288c) (Baker's yeast).